The primary structure comprises 113 residues: MELPANVQNQIMQFQQLQQQLQMIMYQKQQFETQLKEMEKAIEEMEKSGSEEVFKMAGGILIKRNKAEVKEELSERVETLQLRVTTFEKQEEKMQKRYTELQENLQKAMGQGQ.

Belongs to the prefoldin subunit beta family. As to quaternary structure, heterohexamer of two alpha and four beta subunits.

It is found in the cytoplasm. Its function is as follows. Molecular chaperone capable of stabilizing a range of proteins. Seems to fulfill an ATP-independent, HSP70-like function in archaeal de novo protein folding. This is Prefoldin subunit beta from Methanococcus maripaludis (strain C6 / ATCC BAA-1332).